The primary structure comprises 208 residues: Glycerol-3-phosphate acyltransferase (208 aa).

Transmembrane regions (helical) follow at residues 3–23, 51–71, 78–98, 115–135, and 140–160; these read ILLAALVAYLIGSVSFAVVVS, KAAILTLVGDAFKGWIAVWLA, DVAIAWVAIAVFLGHLYPVFF, AVHPVLGLATALTWLIVAFFF, and LAALVAAVFAPVFDVFLFGMP.

It belongs to the PlsY family. In terms of assembly, probably interacts with PlsX.

Its subcellular location is the cell inner membrane. The catalysed reaction is an acyl phosphate + sn-glycerol 3-phosphate = a 1-acyl-sn-glycero-3-phosphate + phosphate. It participates in lipid metabolism; phospholipid metabolism. Its function is as follows. Catalyzes the transfer of an acyl group from acyl-phosphate (acyl-PO(4)) to glycerol-3-phosphate (G3P) to form lysophosphatidic acid (LPA). This enzyme utilizes acyl-phosphate as fatty acyl donor, but not acyl-CoA or acyl-ACP. This chain is Glycerol-3-phosphate acyltransferase, found in Burkholderia orbicola (strain MC0-3).